The sequence spans 808 residues: Piwi-like protein 1 (808 aa).

The 120-residue stretch at 214-333 (RINRVLNENN…IPGELCYLCG (120 aa)) folds into the PAZ domain. Residues 300-322 (SMVRPKEKTENEPEGPTETDQSL) are disordered. In terms of domain architecture, Piwi spans 492 to 790 (HMALVFIPDD…LAELVGKIHR (299 aa)).

The protein belongs to the argonaute family. Piwi subfamily. As to expression, expressed in dividing adult somatic stem cells (neoblasts).

The chain is Piwi-like protein 1 (wi-1) from Schmidtea mediterranea (Freshwater planarian flatworm).